The primary structure comprises 621 residues: MRILQLHCDSIEYTPTKKEIKSAEEIENPQTQRLEEIVVAFVAIEDGDDSSVAKNAISQIKNSMEKIGCKKLLLYPYAHLSSNLAKPSTAMSLLQEMESEASDLEVSHSPFGWTKSYKVQVKGHPLAESSKVVTKDSTTKDDDEDTSDALKGESTIRSYWKIMSPDGTMINIGDYDFSNHKKLEILAKYESAKQRQVDEPPPHVALMKKLAIADYEPASDSGNMRFFPNGRLMKSLIERYVTDRVKEYGGYEVETPIMYDSEHPSMVSYFNRFPARQYNIDSEGKKLFLRFAACFGQFLMANQFQMSYKNLPYKLYELTRYSFRREQSGELVGLRRLRAFTMPDCHAFCKDIPQAVDEIKVRFDLSQSVLKELGIDESDYDMAIRFTEDFYNENKSAIEELVKKHGRPVLVEMWKEKFFYFVLKWEFNFIDNLGKASALSTDQIDVENGDRYGIEFVDENNTAQHPIILHNSPSGAIERIIYALLEKAADDSKKGKKPQLPLWLAPTQVRIIPLKEEFYDFCNNLCDKISAQNVRVDVDDRNESIGKRIREAEKEWIQYILVIGEKEAGSENLSIRDRQTGNVREVSFDDFMNEINEQTSGKPYTGLNQSQHLSKRPQLMV.

Positions 1 to 137 (MRILQLHCDS…ESSKVVTKDS (137 aa)) are editing domain. A disordered region spans residues 128–150 (ESSKVVTKDSTTKDDDEDTSDAL). The segment at 202-501 (PHVALMKKLA…SKKGKKPQLP (300 aa)) is catalytic. Residues Cys294, His346, and His470 each contribute to the Zn(2+) site. A compositionally biased stretch (polar residues) spans 598–612 (QTSGKPYTGLNQSQH). The disordered stretch occupies residues 598 to 621 (QTSGKPYTGLNQSQHLSKRPQLMV).

It belongs to the class-II aminoacyl-tRNA synthetase family. Homodimer. The cofactor is Zn(2+).

Its subcellular location is the cytoplasm. It carries out the reaction tRNA(Thr) + L-threonine + ATP = L-threonyl-tRNA(Thr) + AMP + diphosphate + H(+). In terms of biological role, catalyzes the attachment of threonine to tRNA(Thr) in a two-step reaction: L-threonine is first activated by ATP to form Thr-AMP and then transferred to the acceptor end of tRNA(Thr). Also edits incorrectly charged L-seryl-tRNA(Thr). The chain is Threonine--tRNA ligase from Nitrosopumilus maritimus (strain SCM1).